Reading from the N-terminus, the 874-residue chain is Lon protease (874 aa).

The region spanning 18-261 (LPVLPLDDAV…RLLTWTKEHL (244 aa)) is the Lon N-terminal domain. 3 disordered regions span residues 47–68 (VDAA…GISS), 120–144 (GGVR…SGAG), and 298–318 (LSEL…EPAD). Low complexity predominate over residues 124-142 (PAPAGTDTTGTGTADATSG). 430–437 (GPPGVGKT) provides a ligand contact to ATP. The Lon proteolytic domain maps to 667 to 851 (TALPGVATGL…REVLDLALEP (185 aa)). Residues Ser757 and Lys800 contribute to the active site. A disordered region spans residues 853 to 874 (FDADHGGRSPGRAGHSPTALAA).

The protein belongs to the peptidase S16 family. Homohexamer. Organized in a ring with a central cavity.

It localises to the cytoplasm. It carries out the reaction Hydrolysis of proteins in presence of ATP.. ATP-dependent serine protease that mediates the selective degradation of mutant and abnormal proteins as well as certain short-lived regulatory proteins. Required for cellular homeostasis and for survival from DNA damage and developmental changes induced by stress. Degrades polypeptides processively to yield small peptide fragments that are 5 to 10 amino acids long. Binds to DNA in a double-stranded, site-specific manner. The sequence is that of Lon protease from Frankia alni (strain DSM 45986 / CECT 9034 / ACN14a).